The following is a 153-amino-acid chain: MNKNFEEQEKKAKGGVRLAREEVFKLVFGVEATESASEELKQAFDIYLQNSEELIGTLNENQLEFLKSSIDGIAKNYDNIKDIIKKNTQNWAYERIGVVERALLIVATYEFIFKNAPIEVIANEIIELAKEYGNEKSYEFVNGILANIEKSKK.

The protein belongs to the NusB family.

In terms of biological role, involved in transcription antitermination. Required for transcription of ribosomal RNA (rRNA) genes. Binds specifically to the boxA antiterminator sequence of the ribosomal RNA (rrn) operons. This is Transcription antitermination protein NusB from Fusobacterium nucleatum subsp. nucleatum (strain ATCC 25586 / DSM 15643 / BCRC 10681 / CIP 101130 / JCM 8532 / KCTC 2640 / LMG 13131 / VPI 4355).